A 338-amino-acid chain; its full sequence is Ketol-acid reductoisomerase (NADP(+)) (338 aa).

Residues 1 to 181 (MKIYYDKDCN…GGGKAGIIET (181 aa)) form the KARI N-terminal Rossmann domain. Residues 24-27 (YGSQ), K47, S50, S52, and 82-85 (DEIQ) each bind NADP(+). H107 is an active-site residue. NADP(+) is bound at residue G133. Residues 182-327 (SFKEETETDL…ARLRSMMAWI (146 aa)) enclose the KARI C-terminal knotted domain. D190, E194, E226, and E230 together coordinate Mg(2+). S251 is a binding site for substrate.

The protein belongs to the ketol-acid reductoisomerase family. Mg(2+) serves as cofactor.

The catalysed reaction is (2R)-2,3-dihydroxy-3-methylbutanoate + NADP(+) = (2S)-2-acetolactate + NADPH + H(+). It carries out the reaction (2R,3R)-2,3-dihydroxy-3-methylpentanoate + NADP(+) = (S)-2-ethyl-2-hydroxy-3-oxobutanoate + NADPH + H(+). Its pathway is amino-acid biosynthesis; L-isoleucine biosynthesis; L-isoleucine from 2-oxobutanoate: step 2/4. It participates in amino-acid biosynthesis; L-valine biosynthesis; L-valine from pyruvate: step 2/4. Involved in the biosynthesis of branched-chain amino acids (BCAA). Catalyzes an alkyl-migration followed by a ketol-acid reduction of (S)-2-acetolactate (S2AL) to yield (R)-2,3-dihydroxy-isovalerate. In the isomerase reaction, S2AL is rearranged via a Mg-dependent methyl migration to produce 3-hydroxy-3-methyl-2-ketobutyrate (HMKB). In the reductase reaction, this 2-ketoacid undergoes a metal-dependent reduction by NADPH to yield (R)-2,3-dihydroxy-isovalerate. This is Ketol-acid reductoisomerase (NADP(+)) from Geotalea uraniireducens (strain Rf4) (Geobacter uraniireducens).